We begin with the raw amino-acid sequence, 240 residues long: Putative F-box/kelch-repeat protein At2g29860 (240 aa).

Residues 1–20 form a disordered region; the sequence is MVLLSEIPGGSNGDDPNMNP. In terms of domain architecture, F-box spans 17-63; that stretch reads NMNPQELPEELIESIVAPIPRCYYPSLSLLSRAFRHVITSQQLFVTR. Kelch repeat units follow at residues 120 to 165 and 167 to 212; these read KIYV…VIDG and IYVI…VTYA.

In Arabidopsis thaliana (Mouse-ear cress), this protein is Putative F-box/kelch-repeat protein At2g29860.